The chain runs to 183 residues: Large ribosomal subunit protein uL6 (183 aa).

The protein belongs to the universal ribosomal protein uL6 family. As to quaternary structure, part of the 50S ribosomal subunit.

Its function is as follows. This protein binds to the 23S rRNA, and is important in its secondary structure. It is located near the subunit interface in the base of the L7/L12 stalk, and near the tRNA binding site of the peptidyltransferase center. This is Large ribosomal subunit protein uL6 from Chlamydia muridarum (strain MoPn / Nigg).